The chain runs to 274 residues: Carboxy-S-adenosyl-L-methionine synthase (274 aa).

S-adenosyl-L-methionine is bound by residues Tyr59, 93 to 95, 149 to 150, Asn164, and Arg231; these read GCS and DI.

It belongs to the class I-like SAM-binding methyltransferase superfamily. Cx-SAM synthase family. Homodimer.

It carries out the reaction prephenate + S-adenosyl-L-methionine = carboxy-S-adenosyl-L-methionine + 3-phenylpyruvate + H2O. Functionally, catalyzes the conversion of S-adenosyl-L-methionine (SAM) to carboxy-S-adenosyl-L-methionine (Cx-SAM). This chain is Carboxy-S-adenosyl-L-methionine synthase, found in Psychrobacter sp. (strain PRwf-1).